The sequence spans 413 residues: N-acylneuraminate cytidylyltransferase (413 aa).

It belongs to the CMP-NeuNAc synthase family. Mg(2+) is required as a cofactor. Requires Mn(2+) as cofactor.

It is found in the cytoplasm. It carries out the reaction an N-acylneuraminate + CTP = a CMP-N-acyl-beta-neuraminate + diphosphate. In terms of biological role, catalyzes the formation of CMP-N-acetylneuraminic acid (CMP-NeuNAc), which is essential for the formation of the capsule. The sequence is that of N-acylneuraminate cytidylyltransferase (neuA) from Streptococcus agalactiae serotype Ia (strain ATCC 27591 / A909 / CDC SS700).